Here is a 121-residue protein sequence, read N- to C-terminus: Basic phospholipase A2 homolog piratoxin-1 (121 aa).

7 disulfide bridges follow: C26–C115, C28–C44, C43–C95, C49–C121, C50–C88, C57–C81, and C75–C86. Residues 105–117 form an important for membrane-damaging activities in eukaryotes and bacteria; heparin-binding region; the sequence is KLYRYHLKPFCKK.

Belongs to the phospholipase A2 family. Group II subfamily. K49 sub-subfamily. In terms of assembly, homodimer; non-covalently linked. Expressed by the venom gland.

It is found in the secreted. Its activity is regulated as follows. Rosmarinic acid inhibits the myotoxic activity. Bromophenacyl bromide (BPB) inhibits the myotoxic activity through a covalent binding. Caffeic acid and aristolochic acid, two plant compounds used in folk medicine used to treat envenomation, inhibit the myotoxic activity. In terms of biological role, snake venom phospholipase A2 (PLA2) homolog that lacks enzymatic activity. Is myotoxic and displays edema-inducing activities. Induces neuromuscular blockage. A model of myotoxic mechanism has been proposed: an apo Lys49-PLA2 is activated by the entrance of a hydrophobic molecule (e.g. fatty acid) at the hydrophobic channel of the protein leading to a reorientation of a monomer. This reorientation causes a transition between 'inactive' to 'active' states, causing alignment of C-terminal and membrane-docking sites (MDoS) side-by-side and putting the membrane-disruption sites (MDiS) in the same plane, exposed to solvent and in a symmetric position for both monomers. The MDoS region stabilizes the toxin on membrane by the interaction of charged residues with phospholipid head groups. Subsequently, the MDiS region destabilizes the membrane with penetration of hydrophobic residues. This insertion causes a disorganization of the membrane, allowing an uncontrolled influx of ions (i.e. calcium and sodium), and eventually triggering irreversible intracellular alterations and cell death. In Bothrops pirajai (Piraja's lancehead), this protein is Basic phospholipase A2 homolog piratoxin-1.